A 185-amino-acid chain; its full sequence is Ribosomal RNA small subunit methyltransferase G (185 aa).

S-adenosyl-L-methionine is bound by residues G59, F64, 110 to 111 (IQ), and R127.

Belongs to the methyltransferase superfamily. RNA methyltransferase RsmG family.

Its subcellular location is the cytoplasm. It catalyses the reaction guanosine(527) in 16S rRNA + S-adenosyl-L-methionine = N(7)-methylguanosine(527) in 16S rRNA + S-adenosyl-L-homocysteine. Specifically methylates the N7 position of guanine in position 527 of 16S rRNA. The sequence is that of Ribosomal RNA small subunit methyltransferase G from Helicobacter hepaticus (strain ATCC 51449 / 3B1).